Here is a 261-residue protein sequence, read N- to C-terminus: Ribosomal RNA small subunit methyltransferase J (261 aa).

Residues 111–112, 127–128, 163–164, and Asp181 contribute to the S-adenosyl-L-methionine site; these read RD, ER, and SS.

Belongs to the methyltransferase superfamily. RsmJ family.

The protein localises to the cytoplasm. It carries out the reaction guanosine(1516) in 16S rRNA + S-adenosyl-L-methionine = N(2)-methylguanosine(1516) in 16S rRNA + S-adenosyl-L-homocysteine + H(+). Specifically methylates the guanosine in position 1516 of 16S rRNA. The sequence is that of Ribosomal RNA small subunit methyltransferase J from Shewanella sp. (strain MR-4).